We begin with the raw amino-acid sequence, 330 residues long: MADIIARLREDGIQKRVIQEGRGELPDFQDGTKATFHYRTLHSDDEGTVLDDSRARGKPMELIIGKKFKLPVWETIVCTMREGEIAQFLCDIKHVVLYPLVAKSLRNIAVGKDPLEGQRHCCGVAQMREHSSLGHADLDALQQNPQPLIFHMEMLKVESPGTYQQDPWAMTDEEKAKAVPLIHQEGNRLYREGHVKEAAAKYYDAIACLKNLQMKEQPGSPEWIQLDQQITPLLLNYCQCKLVVEEYYEVLDHCSSILNKYDDNVKAYFKRGKAHAAVWNAQEAQADFAKVLELDPALAPVVSRELRALEARIRQKDEEDKARFRGIFSH.

A PPIase FKBP-type domain is found at 31–121 (GTKATFHYRT…KDPLEGQRHC (91 aa)). The residue at position 43 (serine 43) is a Phosphoserine. TPR repeat units follow at residues 179 to 212 (VPLI…LKNL), 231 to 264 (TPLL…YDDN), and 265 to 298 (VKAY…DPAL).

In terms of assembly, interacts with RET in the pituitary gland; this interaction prevents the formation of the AIP-survivin complex. In terms of tissue distribution, widely expressed. Higher levels seen in the heart, placenta and skeletal muscle. Not expressed in the liver.

The protein localises to the cytoplasm. May play a positive role in AHR-mediated (aromatic hydrocarbon receptor) signaling, possibly by influencing its receptivity for ligand and/or its nuclear targeting. Its function is as follows. Cellular negative regulator of the hepatitis B virus (HBV) X protein. This Homo sapiens (Human) protein is AH receptor-interacting protein (AIP).